A 92-amino-acid polypeptide reads, in one-letter code: Small ribosomal subunit protein uS19 (92 aa).

This sequence belongs to the universal ribosomal protein uS19 family.

Its function is as follows. Protein S19 forms a complex with S13 that binds strongly to the 16S ribosomal RNA. The protein is Small ribosomal subunit protein uS19 of Corynebacterium jeikeium (strain K411).